The sequence spans 1692 residues: Adenylate cyclase (1692 aa).

2 disordered regions span residues 1 to 22 (MDQSKRLLKSAVPNPPEHFKTG) and 103 to 142 (SLSDTGRTKSDTALAARESSEKSEVPRDTRSAGIKPYKEN). Over residues 120 to 132 (ESSEKSEVPRDTR) the composition is skewed to basic and acidic residues. Residues 174–195 (FTNLTFPEPISDDSDSVEFQRD) form a required for interaction with gpa2 region. Residues 292–380 (KEFFLRVYRD…SDEEINEEDN (89 aa)) form the Ras-associating domain. LRR repeat units follow at residues 430–450 (ELISLNVSHNLSLDLPLDFME), 454–474 (KLKRLDISNNLRSPRGKPITA), 477–498 (QLEVLNMSRNDIYELDPLIFSG), 503–524 (SLKELNIANNKLFFLPHSTRYL), 526–547 (NLTYLDLSYNNFVTFPLIITEL), 549–570 (QLETLNFSHNLLSQISSKIGSL), 572–594 (KLKHLYLQFNDLSNRLPQEIGLL), 596–617 (NLETIDLSYNAITNIASLSECP), 618–639 (KLNSINVACNLLSFYEYSNPSA), 660–681 (NLVYFDISHAKLIGLKDSVIET), 684–705 (NVETVKVNYNHFTSISDAISAM), 707–729 (NLKYLSCTNCEMSYVSPNLGKLK), 730–751 (HLVHLDLHANNIKIFPEEVWQV), 753–774 (SLKVVNLSSNILEKIKLPVATS), 783–805 (QLKIMRTLSGNPVSSLSSQEFVM), 807–827 (TVEELYLVDNRLGNDCFTALE), 831–852 (CLKVLNLSYNYLTEIPSKFFQN), 855–876 (DLKHLFVSGNELANLSISSTAQ), 878–899 (LLETLYANGNRLSSFPKNEALS), 901–922 (SLRFLDISTNNLQNLAVEKAEK), and 930–951 (QLEYLNLSGNTWFRFSEHEDTN). The PPM-type phosphatase domain maps to 995-1275 (RYGVCGYLSR…KNVLVVIVEL (281 aa)). Residues 1332–1469 (AMVFTDIKNS…PVVNRTSRVV (138 aa)) form the Guanylate cyclase domain. Mg(2+)-binding residues include Asp1337 and Asp1380. Asp1337 and Asp1380 together coordinate Mn(2+). Positions 1585–1597 (SDSKSVHGEEGGS) are enriched in basic and acidic residues. Residues 1585-1614 (SDSKSVHGEEGGSGKRSVSSLRNVSPSEST) are disordered. Residues 1600–1614 (RSVSSLRNVSPSEST) are compositionally biased toward polar residues.

Belongs to the adenylyl cyclase class-3 family. In terms of assembly, interacts (via N-terminus) with gpa2; the interaction is direct and serves to activate adenylate cyclase and cAMP-PKA signaling, to repress sexual development and gluconeogenesis. Interacts with git1. Mn(2+) is required as a cofactor.

The protein resides in the cytoplasm. The enzyme catalyses ATP = 3',5'-cyclic AMP + diphosphate. Activated by binding G protein gpa2. Activated by git1. In contrast to yeast cyclase, S.pombe cyclase is not likely to be regulated by RAS proteins. In terms of biological role, acts in glucose-induced cAMP signaling by catalyzing the synthesis of the second messenger, cAMP to activate PKA signaling and repress sexual development and gluconeogenesis. The sequence is that of Adenylate cyclase from Schizosaccharomyces pombe (strain 972 / ATCC 24843) (Fission yeast).